Here is a 350-residue protein sequence, read N- to C-terminus: LIM domain-containing protein unc-95 (350 aa).

The span at 1-37 (MTISPQPSHQQFESYQWTTESRSSQQRHGTGTPSQDG) shows a compositional bias: polar residues. A disordered region spans residues 1–65 (MTISPQPSHQ…ESRNSNKDKV (65 aa)). Basic and acidic residues predominate over residues 45–65 (PVERHVARWRSESRNSNKDKV). A coiled-coil region spans residues 83–110 (LTALKNDVEQTTEIIRRKQEQMRMERRQ). 3 disordered regions span residues 177–198 (RRGQ…EIEY), 206–225 (PEEQ…METD), and 235–262 (MSEE…SGSP). Residues 268–334 (AVCAYCSEEI…HDCFYKLYNG (67 aa)) form the LIM zinc-binding domain.

Ubiquitinated. Ubiquitination by rnf-5 leads to dissociation from muscle dense bodies during molting and is required for ecdysis. As to expression, expressed in the body wall muscles, vulval muscles and the anal muscles. Expressed in the muscle arms of the head muscle cells that form neuromuscular junctions and in the anal depressor muscle.

It localises to the cytoplasm. The protein localises to the nucleus. The protein resides in the cell membrane. It is found in the myofibril. Its subcellular location is the sarcomere. It localises to the m line. The protein localises to the cell junction. The protein resides in the focal adhesion. Its function is as follows. Required for the assembly and integrity of muscle dense bodies, which establish the adhesion sites of the muscle cells to the extracellular matrix. Decreased localization of unc-95 to dense bodies and their subsequent dissociation plays an important role in ecdysis during molting. Involved in the organization of the muscle sarcomeric structure and thereby required for locomotion. This Caenorhabditis elegans protein is LIM domain-containing protein unc-95.